The sequence spans 218 residues: CD99 antigen-like protein 2 (218 aa).

The N-terminal stretch at 1–25 (MVAWRSAFLVCLAFSLATLVQRGSG) is a signal peptide. Topologically, residues 26–136 (DFDDFNLKDA…PGSGMVAETG (111 aa)) are extracellular. The tract at residues 72-128 (LADALDDRNDRDDGRRKPIAGGGGFSDKDLEDIVGGGEYKPDKGKGDGRYGSNDDPG) is disordered. 2 stretches are compositionally biased toward basic and acidic residues: residues 76 to 87 (LDDRNDRDDGRR) and 110 to 119 (YKPDKGKGDG). O-linked (Xyl...) (chondroitin sulfate) serine glycosylation is present at Ser-129. A helical membrane pass occupies residues 137-157 (TIAGVASALAMALIGAVSSYI). Residues 158 to 218 (SYQQKKFCFS…EPPPSEPARI (61 aa)) are Cytoplasmic-facing.

This sequence belongs to the CD99 family. Post-translationally, O-glycosylated.

The protein localises to the cell membrane. Its subcellular location is the cell junction. It localises to the secreted. Its function is as follows. Plays a role in a late step of leukocyte extravasation helping cells to overcome the endothelial basement membrane. Acts at the same site as, but independently of, PECAM1. Homophilic adhesion molecule, but these interactions may not be required for cell aggregation. The polypeptide is CD99 antigen-like protein 2 (CD99L2) (Pongo abelii (Sumatran orangutan)).